The chain runs to 1076 residues: MKEVTANFSAKDIEREVQEYWRTHDTYKAVKEQHSAGRAFFFVDGPPYTTGQIHLGTAWNKIIKDSILRYHRMNGRNVIDRAGYDMHGLPIEVKVEQKLGFASKKDIETFGIEKFINECREFAIKNKELMDAQFENLGIWMDFKNAYQTIKPWYVEAAWWTLAKAQEKGMLERGYRVVNWCPRCETAIADAEVEYWDETDPSVFVKFPIRGKVSESLVIWTTTPWTLPANVAVAVGKEFVYARVHAEKNGREEYLWVAEDLVKSVLKKGRYQKFETLETKKGAELIGWEYDSPLMDVVPIQKEIAHRVVAADFVAMENTGMVHIAPGHGWDDYVLGTKEKLAIVCPVDGAGKFRPETGIFAGKFVRDANGEVLDALGERLLATEKITHRYGHCWRCKTPIIFRATSQWFLKASEMRDLMLSEVKKVTWYPEWAGSARFYDWIKEARDWCVSRQRYWGIPIPVWICDKCDKYRVIGTIAELEKASGQKVPDPHRPFVDQVTIPCECGGTMKRVGDIFDVWFDSAVASWATVGFPAKTDEFEKLWPADFITEGQDQTRGWFYSQLGASTIAFGKAPYKSVCMHGFALDAEGRKMSKSLGNVVAPEEVIAKVGVDVLRLYVLSSSAPWDDLKFNWDGIATVNRTMNILWNVYRFPMPYMILDRFEPEAKSGHWDGSFVRSHIRELPDEDRWIVSRINTVAGIVDASTKECQLHRATREILNFILEDLSRWYVQLVRPRMWLEGESEQKIFAYETIYYVMRRLVDLMAPFAPHITEEIYSNLRCKNDPGSVHMLDWQACDDALTNRELEHAMELVRSFDDAVQNARQAGKRKLRWPVDEVVIVTAKPEVKDAVARLNEVCMDRANARKVTVVIGRWDRIGWHAEPVMKALGKGFGKNSFAVKGLIEAADGNAIKAAVDAGQKFQLKIEEGKISKPDDLKIGTDYEQDVVEIGIEHVRFTEKLPTDIFSAPMEDGTVYVDVALTPDLEAEGYAREIIRRIQEMRRQLDLAVEDFIMVDVAVADKRICELVGASWKPGIADEVRAKTLSLHHSAEPAGSSHQLAKDWDVEGIAMTIGISKVA.

Positions 47–57 (PYTTGQIHLGT) match the 'HIGH' region motif. Positions 591 to 595 (KMSKS) match the 'KMSKS' region motif. An ATP-binding site is contributed by Lys-594.

The protein belongs to the class-I aminoacyl-tRNA synthetase family. IleS type 2 subfamily. As to quaternary structure, monomer. It depends on Zn(2+) as a cofactor.

The protein localises to the cytoplasm. It carries out the reaction tRNA(Ile) + L-isoleucine + ATP = L-isoleucyl-tRNA(Ile) + AMP + diphosphate. Functionally, catalyzes the attachment of isoleucine to tRNA(Ile). As IleRS can inadvertently accommodate and process structurally similar amino acids such as valine, to avoid such errors it has two additional distinct tRNA(Ile)-dependent editing activities. One activity is designated as 'pretransfer' editing and involves the hydrolysis of activated Val-AMP. The other activity is designated 'posttransfer' editing and involves deacylation of mischarged Val-tRNA(Ile). This Methanoregula boonei (strain DSM 21154 / JCM 14090 / 6A8) protein is Isoleucine--tRNA ligase.